A 113-amino-acid chain; its full sequence is Crustacean hyperglycemic hormones B (113 aa).

Positions 1–26 are cleaved as a signal peptide; it reads MVAFRMMSMALLVVVASSWWASPVEA. 3 disulfides stabilise this stretch: Cys46/Cys82, Cys62/Cys78, and Cys65/Cys91. Residue Val111 is modified to Valine amide.

This sequence belongs to the arthropod CHH/MIH/GIH/VIH hormone family. In terms of tissue distribution, expressed at a constant level in the eyestalks of juveniles and mature females. A low level expression is seen in the central nervous system.

Its subcellular location is the secreted. In terms of biological role, hormone found in the sinus gland of isopods and decapods which controls the blood sugar level. Has a secretagogue action over the amylase released from the midgut gland. May act as a stress hormone and may be involved in the control of molting and reproduction. In Metapenaeus ensis (Greasyback shrimp), this protein is Crustacean hyperglycemic hormones B.